Reading from the N-terminus, the 415-residue chain is Protein fuzzy homolog (415 aa).

It belongs to the fuzzy family. As to quaternary structure, component of the CPLANE (ciliogenesis and planar polarity effectors) complex, composed of INTU, FUZ and WDPCP. Interacts with CPLANE1. Interacts with CPLANE2. Expressed in dermal and epidermal cells.

Its subcellular location is the cytoplasm. The protein localises to the cytoskeleton. It localises to the cilium basal body. Probable planar cell polarity effector involved in cilium biogenesis. May regulate protein and membrane transport to the cilium. Proposed to function as core component of the CPLANE (ciliogenesis and planar polarity effectors) complex involved in the recruitment of peripheral IFT-A proteins to basal bodies. May regulate the morphogenesis of hair follicles which depends on functional primary cilia. Binds phosphatidylinositol 3-phosphate with highest affinity, followed by phosphatidylinositol 4-phosphate and phosphatidylinositol 5-phosphate. The chain is Protein fuzzy homolog (Fuz) from Mus musculus (Mouse).